Here is a 519-residue protein sequence, read N- to C-terminus: NADH-quinone oxidoreductase subunit N (519 aa).

13 consecutive transmembrane segments (helical) span residues 14 to 34 (LLPAIIMVVGASILLLSEVFL), 44 to 64 (AVLTVVTAVAAGAMALTTMFE), 82 to 102 (FLTFVVCVGLGLATLSSVSFL), 117 to 137 (LFASAGMSLLAMSNELITLFV), 167 to 187 (FILGAFSSAVLLYGAALLYGA), 209 to 229 (GLVYAGIILVITGFAFKVAAV), 249 to 269 (LMSVGVKAAAFAAMVRVFFMV), 278 to 298 (LLGLFSVLAFLTMVAGNLLAI), 307 to 327 (LAYSSIAHAGYLLVGVAALFV), 359 to 379 (ILYYLLAYTFSAVGAFAIVSV), 407 to 427 (WAFAMAAFMLSLGGIPPTIGF), 431 to 451 (LLIFQAAVDAGLIGLTIVGVL), and 487 to 507 (LALVLSTAAVVILGIIPGPIM).

This sequence belongs to the complex I subunit 2 family. NDH-1 is composed of 14 different subunits. Subunits NuoA, H, J, K, L, M, N constitute the membrane sector of the complex.

It is found in the cell inner membrane. The enzyme catalyses a quinone + NADH + 5 H(+)(in) = a quinol + NAD(+) + 4 H(+)(out). Functionally, NDH-1 shuttles electrons from NADH, via FMN and iron-sulfur (Fe-S) centers, to quinones in the respiratory chain. The immediate electron acceptor for the enzyme in this species is believed to be ubiquinone. Couples the redox reaction to proton translocation (for every two electrons transferred, four hydrogen ions are translocated across the cytoplasmic membrane), and thus conserves the redox energy in a proton gradient. This is NADH-quinone oxidoreductase subunit N from Myxococcus xanthus (strain DK1622).